The following is a 219-amino-acid chain: Carboxypeptidase Y inhibitor (219 aa).

N-acetylmethionine is present on M1.

Belongs to the phosphatidylethanolamine-binding protein family. As to quaternary structure, monomer.

Its subcellular location is the cytoplasm. Specific and potent inhibitor of carboxypeptidase Y. The sequence is that of Carboxypeptidase Y inhibitor (TFS1) from Saccharomyces cerevisiae (strain ATCC 204508 / S288c) (Baker's yeast).